Consider the following 372-residue polypeptide: Adaptive-response sensory kinase SasA (372 aa).

In terms of domain architecture, Histidine kinase spans 147 to 360 (MVAHELRTPL…CFHFTVPVWQ (214 aa)). Residue His-150 is modified to Phosphohistidine; by autocatalysis.

In terms of assembly, homooligomerizes. Interacts with KaiC. Participates in the KaiBC complex, whose core is composed of a KaiC homohexamer and 6 KaiB.

The catalysed reaction is ATP + protein L-histidine = ADP + protein N-phospho-L-histidine.. Member of the two-component regulatory system SasA/RpaA involved in genome-wide circadian gene expression. One of several clock output pathways. Participates in the Kai clock protein complex, the main circadian regulator in cyanobacteria, via its interaction with KaiC. KaiC enhances the autophosphorylation activity of SasA, which then transfers its phosphate group to RpaA to activate it. In addition to its output function, recruits fold-shifted KaiB (KaiB(fs)) to KaiC to cooperatively form the KaiB(6):KaiC(6) complex (independent of SasA kinase activity). Required for robustness of the circadian rhythm of gene expression and is involved in clock output, also required for adaptation to light/dark cycles. The sequence is that of Adaptive-response sensory kinase SasA from Prochlorococcus marinus (strain AS9601).